The sequence spans 342 residues: Galactose mutarotase (342 aa).

Residues 81–82 (NR) and H107 each bind beta-D-galactose. A Phosphoserine modification is found at S124. The active-site Proton donor is H176. Beta-D-galactose-binding positions include 176 to 178 (HSY), D243, Q279, and E307. E307 serves as the catalytic Proton acceptor.

Belongs to the aldose epimerase family. As to quaternary structure, monomer.

The protein localises to the cytoplasm. It carries out the reaction alpha-D-galactose = beta-D-galactose. The catalysed reaction is alpha-D-glucose = beta-D-glucose. Its pathway is carbohydrate metabolism; hexose metabolism. It functions in the pathway carbohydrate metabolism; galactose metabolism. Its function is as follows. Mutarotase that catalyzes the interconversion of beta-D-galactose and alpha-D-galactose during galactose metabolism. Beta-D-galactose is metabolized in the liver into glucose 1-phosphate, the primary metabolic fuel, by the action of four enzymes that constitute the Leloir pathway: GALM, GALK1 (galactokinase), GALT (galactose-1-phosphate uridylyltransferase) and GALE (UDP-galactose-4'-epimerase). Involved in the maintenance of the equilibrium between the beta- and alpha-anomers of galactose, therefore ensuring a sufficient supply of the alpha-anomer for GALK1. Also active on D-glucose although shows a preference for galactose over glucose. In Bos taurus (Bovine), this protein is Galactose mutarotase (GALM).